Reading from the N-terminus, the 141-residue chain is Hemoglobin subunit alpha (141 aa).

In terms of domain architecture, Globin spans 1–141 (VLSSKDKANV…VSTVLTSKYR (141 aa)). At serine 3 the chain carries Phosphoserine. N6-succinyllysine occurs at positions 7 and 11. Residue lysine 16 is modified to N6-acetyllysine; alternate. The residue at position 16 (lysine 16) is an N6-succinyllysine; alternate. At tyrosine 24 the chain carries Phosphotyrosine. Residue lysine 40 is modified to N6-succinyllysine. At serine 49 the chain carries Phosphoserine. Histidine 58 serves as a coordination point for O2. A heme b-binding site is contributed by histidine 87. Serine 102 is modified (phosphoserine). Threonine 108 carries the post-translational modification Phosphothreonine. A Phosphoserine modification is found at serine 124. 2 positions are modified to phosphothreonine: threonine 134 and threonine 137. Serine 138 is subject to Phosphoserine.

This sequence belongs to the globin family. In terms of assembly, heterotetramer of two alpha chains and two beta chains. As to expression, red blood cells.

Involved in oxygen transport from the lung to the various peripheral tissues. In terms of biological role, hemopressin acts as an antagonist peptide of the cannabinoid receptor CNR1. Hemopressin-binding efficiently blocks cannabinoid receptor CNR1 and subsequent signaling. In Lama vicugna (Vicugna), this protein is Hemoglobin subunit alpha (HBA).